A 126-amino-acid chain; its full sequence is Phosphoribosyl-AMP cyclohydrolase (126 aa).

Residue Asp82 coordinates Mg(2+). Cys83 is a binding site for Zn(2+). Positions 84 and 86 each coordinate Mg(2+). Residues Cys99 and Cys106 each coordinate Zn(2+).

It belongs to the PRA-CH family. Homodimer. It depends on Mg(2+) as a cofactor. The cofactor is Zn(2+).

It localises to the cytoplasm. It carries out the reaction 1-(5-phospho-beta-D-ribosyl)-5'-AMP + H2O = 1-(5-phospho-beta-D-ribosyl)-5-[(5-phospho-beta-D-ribosylamino)methylideneamino]imidazole-4-carboxamide. It functions in the pathway amino-acid biosynthesis; L-histidine biosynthesis; L-histidine from 5-phospho-alpha-D-ribose 1-diphosphate: step 3/9. Its function is as follows. Catalyzes the hydrolysis of the adenine ring of phosphoribosyl-AMP. The protein is Phosphoribosyl-AMP cyclohydrolase of Micrococcus luteus (strain ATCC 4698 / DSM 20030 / JCM 1464 / CCM 169 / CCUG 5858 / IAM 1056 / NBRC 3333 / NCIMB 9278 / NCTC 2665 / VKM Ac-2230) (Micrococcus lysodeikticus).